The following is a 215-amino-acid chain: Urease accessory protein UreG 2 (215 aa).

11–18 (GPVGSGKT) is a binding site for GTP.

The protein belongs to the SIMIBI class G3E GTPase family. UreG subfamily. As to quaternary structure, homodimer. UreD, UreF and UreG form a complex that acts as a GTP-hydrolysis-dependent molecular chaperone, activating the urease apoprotein by helping to assemble the nickel containing metallocenter of UreC. The UreE protein probably delivers the nickel.

The protein resides in the cytoplasm. Its function is as follows. Facilitates the functional incorporation of the urease nickel metallocenter. This process requires GTP hydrolysis, probably effectuated by UreG. This Methylorubrum populi (strain ATCC BAA-705 / NCIMB 13946 / BJ001) (Methylobacterium populi) protein is Urease accessory protein UreG 2.